A 300-amino-acid chain; its full sequence is MPSSFVSQLSPSLFSILREQLEKKGFTISIPPHTVFQGRSPTVSCTVYQSGKIVVQGKGTQEFVEFFLEPEILQTFSSQNVQQDLRSRIGVDESGKGDFFGPLCTAGVYASSPQAIEALYKTSICDSKLIPDAKILSLAQNIRSLCACKVITLFPEKYNALYANFQNLNSLLAWTHATIIDNLAPHPAGAVFAISDQFASSERVLLQAVRKKRSDIELIQRHRAEQDVVVAAASILAREAFLSSIHALESQYQIRLLKGASGKVKQRAKEILHNKGQVVLEKVCKTHFKTFNEVLGSGNQ.

The RNase H type-2 domain occupies 86 to 300 (RSRIGVDESG…FNEVLGSGNQ (215 aa)). A divalent metal cation contacts are provided by Asp92, Glu93, and Asp196.

The protein belongs to the RNase HII family. RnhC subfamily. Requires Mn(2+) as cofactor. It depends on Mg(2+) as a cofactor.

Its subcellular location is the cytoplasm. The catalysed reaction is Endonucleolytic cleavage to 5'-phosphomonoester.. In terms of biological role, endonuclease that specifically degrades the RNA of RNA-DNA hybrids. The sequence is that of Ribonuclease HIII from Chlamydia trachomatis serovar L2 (strain ATCC VR-902B / DSM 19102 / 434/Bu).